A 286-amino-acid chain; its full sequence is 4-diphosphocytidyl-2-C-methyl-D-erythritol kinase (286 aa).

Lys-12 is a catalytic residue. 96–106 (PHGAGLGGGSA) lines the ATP pocket. Asp-138 is an active-site residue.

It belongs to the GHMP kinase family. IspE subfamily.

The catalysed reaction is 4-CDP-2-C-methyl-D-erythritol + ATP = 4-CDP-2-C-methyl-D-erythritol 2-phosphate + ADP + H(+). The protein operates within isoprenoid biosynthesis; isopentenyl diphosphate biosynthesis via DXP pathway; isopentenyl diphosphate from 1-deoxy-D-xylulose 5-phosphate: step 3/6. Its function is as follows. Catalyzes the phosphorylation of the position 2 hydroxy group of 4-diphosphocytidyl-2C-methyl-D-erythritol. This is 4-diphosphocytidyl-2-C-methyl-D-erythritol kinase from Nitratidesulfovibrio vulgaris (strain DP4) (Desulfovibrio vulgaris).